The chain runs to 237 residues: Ribosomal RNA small subunit methyltransferase G (237 aa).

S-adenosyl-L-methionine contacts are provided by residues glycine 78, phenylalanine 83, 129 to 130 (AE), and arginine 148.

This sequence belongs to the methyltransferase superfamily. RNA methyltransferase RsmG family.

It localises to the cytoplasm. Specifically methylates the N7 position of a guanine in 16S rRNA. The chain is Ribosomal RNA small subunit methyltransferase G from Clostridium kluyveri (strain ATCC 8527 / DSM 555 / NBRC 12016 / NCIMB 10680 / K1).